The sequence spans 374 residues: Aminomethyltransferase (374 aa).

The protein belongs to the GcvT family. As to quaternary structure, the glycine cleavage system is composed of four proteins: P, T, L and H.

It carries out the reaction N(6)-[(R)-S(8)-aminomethyldihydrolipoyl]-L-lysyl-[protein] + (6S)-5,6,7,8-tetrahydrofolate = N(6)-[(R)-dihydrolipoyl]-L-lysyl-[protein] + (6R)-5,10-methylene-5,6,7,8-tetrahydrofolate + NH4(+). Functionally, the glycine cleavage system catalyzes the degradation of glycine. The chain is Aminomethyltransferase from Edwardsiella ictaluri (strain 93-146).